A 586-amino-acid polypeptide reads, in one-letter code: Protein translocase subunit SecD (586 aa).

6 helical membrane passes run 7-27 (LILI…TLKW), 418-438 (SALA…LSGV), 439-459 (VAGF…LSAF), 465-485 (LTSI…NIVI), 521-541 (TFIA…GFAW), and 546-566 (GIVA…EFII).

It belongs to the SecD/SecF family. SecD subfamily. Forms a complex with SecF. Part of the essential Sec protein translocation apparatus which comprises SecA, SecYEG and auxiliary proteins SecDF. Other proteins may also be involved.

The protein localises to the cell inner membrane. Its function is as follows. Part of the Sec protein translocase complex. Interacts with the SecYEG preprotein conducting channel. SecDF uses the proton motive force (PMF) to complete protein translocation after the ATP-dependent function of SecA. The protein is Protein translocase subunit SecD of Borreliella burgdorferi (strain ATCC 35210 / DSM 4680 / CIP 102532 / B31) (Borrelia burgdorferi).